Here is a 310-residue protein sequence, read N- to C-terminus: tRNA-splicing endonuclease subunit Sen34 (310 aa).

The tract at residues 119 to 177 (GQAAKKQKLEQASGASSSQEAGSSQAAKEDETSDGQASGEQEEAGPSSSQAGPSNGVAP) is disordered. A compositionally biased stretch (low complexity) spans 128 to 144 (EQASGASSSQEAGSSQA). Catalysis depends on residues Tyr247, His255, and Lys286.

It belongs to the tRNA-intron endonuclease family. TRNA splicing endonuclease is a heterotetramer composed of TSEN2, TSEN15, TSEN34/LENG5 and TSEN54. tRNA splicing endonuclease complex also contains proteins of the pre-mRNA 3'-end processing machinery such as CLP1, CPSF1, CPSF4 and CSTF2.

The protein resides in the nucleus. It is found in the nucleolus. The catalysed reaction is pretRNA = a 3'-half-tRNA molecule with a 5'-OH end + a 5'-half-tRNA molecule with a 2',3'-cyclic phosphate end + an intron with a 2',3'-cyclic phosphate and a 5'-hydroxyl terminus.. In terms of biological role, constitutes one of the two catalytic subunit of the tRNA-splicing endonuclease complex, a complex responsible for identification and cleavage of the splice sites in pre-tRNA. It cleaves pre-tRNA at the 5'- and 3'-splice sites to release the intron. The products are an intron and two tRNA half-molecules bearing 2',3'-cyclic phosphate and 5'-OH termini. There are no conserved sequences at the splice sites, but the intron is invariably located at the same site in the gene, placing the splice sites an invariant distance from the constant structural features of the tRNA body. It probably carries the active site for 3'-splice site cleavage. The tRNA splicing endonuclease is also involved in mRNA processing via its association with pre-mRNA 3'-end processing factors, establishing a link between pre-tRNA splicing and pre-mRNA 3'-end formation, suggesting that the endonuclease subunits function in multiple RNA-processing events. The protein is tRNA-splicing endonuclease subunit Sen34 (TSEN34) of Homo sapiens (Human).